The sequence spans 240 residues: ATP synthase subunit a (240 aa).

Helical transmembrane passes span 41–61 (WLVM…LEII), 92–112 (FFPM…IGLI), 121–141 (SINT…VIGF), 152–172 (FIGP…ISNF), 191–211 (VLLG…PIMV), and 212–232 (LGVL…VVYF).

Belongs to the ATPase A chain family. In terms of assembly, F-type ATPases have 2 components, CF(1) - the catalytic core - and CF(0) - the membrane proton channel. CF(1) has five subunits: alpha(3), beta(3), gamma(1), delta(1), epsilon(1). CF(0) has three main subunits: a(1), b(2) and c(9-12). The alpha and beta chains form an alternating ring which encloses part of the gamma chain. CF(1) is attached to CF(0) by a central stalk formed by the gamma and epsilon chains, while a peripheral stalk is formed by the delta and b chains.

It is found in the cell inner membrane. Functionally, key component of the proton channel; it plays a direct role in the translocation of protons across the membrane. The sequence is that of ATP synthase subunit a from Desulfotalea psychrophila (strain LSv54 / DSM 12343).